The sequence spans 413 residues: Eukaryotic initiation factor 4A-11 (413 aa).

The Q motif signature appears at Glu-40–Gln-68. Residues Ile-71–Ile-241 form the Helicase ATP-binding domain. Ala-84 to Thr-91 contacts ATP. The DEAD box motif lies at Asp-189 to Asp-192. Residues Gly-252 to Leu-413 enclose the Helicase C-terminal domain.

The protein belongs to the DEAD box helicase family. eIF4A subfamily. In terms of assembly, eIF4F is a multi-subunit complex, the composition of which varies with external and internal environmental conditions. It is composed of at least EIF4A, EIF4E and EIF4G.

It catalyses the reaction ATP + H2O = ADP + phosphate + H(+). ATP-dependent RNA helicase which is a subunit of the eIF4F complex involved in cap recognition and is required for mRNA binding to ribosome. In the current model of translation initiation, eIF4A unwinds RNA secondary structures in the 5'-UTR of mRNAs which is necessary to allow efficient binding of the small ribosomal subunit, and subsequent scanning for the initiator codon. The sequence is that of Eukaryotic initiation factor 4A-11 from Nicotiana tabacum (Common tobacco).